The following is a 249-amino-acid chain: RNA-free ribonuclease P (249 aa).

Residues 226–249 are disordered; the sequence is NENEPEYENRDKSKEGSSGEIEFI. A compositionally biased stretch (basic and acidic residues) spans 232-242; that stretch reads YENRDKSKEGS.

This sequence belongs to the HARP family.

The enzyme catalyses Endonucleolytic cleavage of RNA, removing 5'-extranucleotides from tRNA precursor.. Its function is as follows. RNA-free RNase P that catalyzes the removal of the 5'-leader sequence from pre-tRNA to produce the mature 5'-terminus. The protein is RNA-free ribonuclease P of Methanosarcina barkeri (strain Fusaro / DSM 804).